The sequence spans 153 residues: 3-hydroxyacyl-[acyl-carrier-protein] dehydratase FabZ (153 aa).

The active site involves histidine 54.

Belongs to the thioester dehydratase family. FabZ subfamily.

It localises to the cytoplasm. The catalysed reaction is a (3R)-hydroxyacyl-[ACP] = a (2E)-enoyl-[ACP] + H2O. Functionally, involved in unsaturated fatty acids biosynthesis. Catalyzes the dehydration of short chain beta-hydroxyacyl-ACPs and long chain saturated and unsaturated beta-hydroxyacyl-ACPs. The protein is 3-hydroxyacyl-[acyl-carrier-protein] dehydratase FabZ of Shewanella loihica (strain ATCC BAA-1088 / PV-4).